The primary structure comprises 279 residues: Ribosomal RNA small subunit methyltransferase I (279 aa).

The protein belongs to the methyltransferase superfamily. RsmI family.

It localises to the cytoplasm. The enzyme catalyses cytidine(1402) in 16S rRNA + S-adenosyl-L-methionine = 2'-O-methylcytidine(1402) in 16S rRNA + S-adenosyl-L-homocysteine + H(+). Functionally, catalyzes the 2'-O-methylation of the ribose of cytidine 1402 (C1402) in 16S rRNA. The chain is Ribosomal RNA small subunit methyltransferase I from Synechocystis sp. (strain ATCC 27184 / PCC 6803 / Kazusa).